Here is a 446-residue protein sequence, read N- to C-terminus: Probable D-serine dehydratase (446 aa).

Residue Lys113 is modified to N6-(pyridoxal phosphate)lysine.

Belongs to the serine/threonine dehydratase family. DsdA subfamily. The cofactor is pyridoxal 5'-phosphate.

The enzyme catalyses D-serine = pyruvate + NH4(+). This Burkholderia lata (strain ATCC 17760 / DSM 23089 / LMG 22485 / NCIMB 9086 / R18194 / 383) protein is Probable D-serine dehydratase.